A 282-amino-acid chain; its full sequence is Aquaporin-6 (282 aa).

The Cytoplasmic segment spans residues 1 to 25 (MDAVEPGGRGWASMLACRLWKAISR). A helical transmembrane segment spans residues 26–46 (ALFAEFLATGLYVFFGVGSVM). Over 47–54 (RWPTALPS) the chain is Extracellular. Residues 55 to 73 (VLQIAITFNLVTAMAVQVT) traverse the membrane as a helical segment. Residues 74–78 (WKASG) lie on the Cytoplasmic side of the membrane. Positions 79–88 (AHANPAVTLA) form an intramembrane region, discontinuously helical. Residues 82-84 (NPA) carry the NPA 1 motif. Over 89-99 (FLVGSHISLPR) the chain is Cytoplasmic. Residues 100-121 (AVAYVAAQLVGATVGAALLYGV) traverse the membrane as a helical segment. Residues 122–141 (MPGDIRETLGINVVRNSVST) are Extracellular-facing. Residues 142–162 (GQAVAVELLLTLQLVLCVFAS) traverse the membrane as a helical segment. The Cytoplasmic segment spans residues 163 to 168 (TDSRQT). A helical membrane pass occupies residues 169–188 (SGSPATMIGISVALGHLIGI). The Extracellular segment spans residues 189–192 (HFTG). Positions 193-205 (CSMNPARSFGPAI) form an intramembrane region, discontinuously helical. The NPA 2 signature appears at 196–198 (NPA). Topologically, residues 206 to 213 (IIGKFTVH) are extracellular. The helical transmembrane segment at 214-234 (WVFWVGPLMGALLASLIYNFV) threads the bilayer. At 235–282 (LFPDTKTLAQRLAILTGTVEVGTGAGAGAEPLKKESQPGSGAVEMESV) the chain is on the cytoplasmic side. The segment at 260 to 282 (GAGAEPLKKESQPGSGAVEMESV) is disordered.

The protein belongs to the MIP/aquaporin (TC 1.A.8) family. Homotetramer; each monomer provides an independent solute pore.

The protein localises to the cytoplasmic vesicle membrane. The catalysed reaction is nitrate(in) = nitrate(out). It catalyses the reaction iodide(out) = iodide(in). It carries out the reaction bromide(in) = bromide(out). The enzyme catalyses chloride(in) = chloride(out). The catalysed reaction is Na(+)(in) = Na(+)(out). It catalyses the reaction H2O(in) = H2O(out). It carries out the reaction CO2(out) = CO2(in). The enzyme catalyses NH4(+)(in) = NH4(+)(out). Its function is as follows. Aquaporins form homotetrameric transmembrane channels, with each monomer independently mediating water transport across the plasma membrane along its osmotic gradient. Unlike classical aquaporins, AQP6 is an intracellular channel with selective anion permeability, particularly for nitrate, and exhibits very low water permeability. It may also facilitate the transport of gases, such as CO2 and NH4(+), as demonstrated in vitro. The chain is Aquaporin-6 from Homo sapiens (Human).